The sequence spans 301 residues: Peptidyl-prolyl isomerase CWC27 (301 aa).

Positions 9 to 159 (TTAKCILYTT…YPAVLKDVEI (151 aa)) constitute a PPIase cyclophilin-type domain. Positions 251-280 (TELHDNVDEATTKETESQENIKEEPMDKRE) are disordered.

This sequence belongs to the cyclophilin-type PPIase family. CWC27 subfamily. Belongs to the CWC complex (or CEF1-associated complex), a spliceosome subcomplex composed of the U2, U5 and U6 snRNAs and at least BUD13, BUD31, BRR2, CDC40, CEF1, CLF1, CUS1, CWC2, CWC15, CWC21, CWC22, CWC23, CWC24, CWC25, CWC27, ECM2, HSH155, IST3, ISY1, LEA1, MSL1, NTC20, PRP8, PRP9, PRP11, PRP19, PRP21, PRP22, PRP45, PRP46, SLU7, SMB1, SMD1, SMD2, SMD3, SMX2, SMX3, SNT309, SNU114, SPP2, SYF1, SYF2, RSE1 and YJU2.

It is found in the cytoplasm. It localises to the nucleus. It catalyses the reaction [protein]-peptidylproline (omega=180) = [protein]-peptidylproline (omega=0). Functionally, PPIases accelerate the folding of proteins. Catalyzes the cis-trans isomerization of proline imidic peptide bonds in oligopeptides. Involved in pre-mRNA splicing. The protein is Peptidyl-prolyl isomerase CWC27 (CWC27) of Saccharomyces cerevisiae (strain ATCC 204508 / S288c) (Baker's yeast).